The following is a 347-amino-acid chain: NADH-ubiquinone oxidoreductase chain 2 (347 aa).

The next 9 membrane-spanning stretches (helical) occupy residues 5–22 (ILTI…MVLI), 26–45 (WLTV…PILM), 60–80 (FLTQ…NLLL), 150–170 (NPNL…WGGL), 178–198 (ILAY…TYNP), 200–220 (LMML…MLFM), 242–262 (SLIL…GFIP), 274–294 (NMII…YFYM), and 324–344 (TLLP…PMML).

The protein belongs to the complex I subunit 2 family. As to quaternary structure, core subunit of respiratory chain NADH dehydrogenase (Complex I) which is composed of 45 different subunits. Interacts with TMEM242.

It is found in the mitochondrion inner membrane. It carries out the reaction a ubiquinone + NADH + 5 H(+)(in) = a ubiquinol + NAD(+) + 4 H(+)(out). Core subunit of the mitochondrial membrane respiratory chain NADH dehydrogenase (Complex I) which catalyzes electron transfer from NADH through the respiratory chain, using ubiquinone as an electron acceptor. Essential for the catalytic activity and assembly of complex I. In Martes flavigula (Yellow-throated marten), this protein is NADH-ubiquinone oxidoreductase chain 2.